A 611-amino-acid polypeptide reads, in one-letter code: UvrABC system protein C (611 aa).

The 85-residue stretch at 12 to 96 folds into the GIY-YIG domain; it reads DQPGIYQYFD…IKQLKPKYNI (85 aa). A UVR domain is found at 202 to 237; it reads EKILEILNQKMQKYAENLQFEEAAEIRDRIKSIESA.

The protein belongs to the UvrC family. As to quaternary structure, interacts with UvrB in an incision complex.

It is found in the cytoplasm. In terms of biological role, the UvrABC repair system catalyzes the recognition and processing of DNA lesions. UvrC both incises the 5' and 3' sides of the lesion. The N-terminal half is responsible for the 3' incision and the C-terminal half is responsible for the 5' incision. The chain is UvrABC system protein C from Nautilia profundicola (strain ATCC BAA-1463 / DSM 18972 / AmH).